Consider the following 756-residue polypeptide: Phosphate transporter PHO1 homolog 6 (756 aa).

The 303-residue stretch at M1–K303 folds into the SPX domain. The Cytoplasmic portion of the chain corresponds to M1 to T355. A helical membrane pass occupies residues F356 to V376. The Extracellular segment spans residues R377–P396. A helical transmembrane segment spans residues L397–F417. Residues W418 to K440 lie on the Cytoplasmic side of the membrane. A helical transmembrane segment spans residues Q441–L461. At D462–E477 the chain is on the extracellular side. The helical transmembrane segment at L478 to F498 threads the bilayer. Residues Y499–R631 are Cytoplasmic-facing. The EXS domain maps to K562–H756. The helical transmembrane segment at L632–Y652 threads the bilayer. Residues D653–E676 are Extracellular-facing. The chain crosses the membrane as a helical span at residues V677 to L697. The Cytoplasmic portion of the chain corresponds to D698–H756.

It belongs to the SYG1 (TC 2.A.94) family. In terms of tissue distribution, specifically expressed in anther connective tissue.

The protein resides in the cell membrane. Its function is as follows. May transport inorganic phosphate (Pi). This is Phosphate transporter PHO1 homolog 6 (PHO1-H6) from Arabidopsis thaliana (Mouse-ear cress).